Consider the following 58-residue polypeptide: Ikitoxin (58 aa).

The region spanning 3–58 (VPGNYPLDKDGNTYKCFLLGENEECLNVCKLHGVQYGYCYASKCWCEYLEDDKDSV) is the LCN-type CS-alpha/beta domain. Cystine bridges form between Cys18–Cys41, Cys27–Cys46, and Cys31–Cys48.

Expressed by the venom gland.

The protein localises to the secreted. Beta toxins bind voltage-independently at site-4 of sodium channels (Nav) and shift the voltage of activation toward more negative potentials thereby affecting sodium channel activation and promoting spontaneous and repetitive firing. Does not produce effect when administered to blowfly and cabbage looper larvae. In mice, does not produce convulsions, tremors, increased ventilation nor death. The protein is Ikitoxin of Parabuthus transvaalicus (Transvaal thick-tailed scorpion).